We begin with the raw amino-acid sequence, 222 residues long: MVEAEDLQSLKTIALLGGCRGPIWLSSQSLGSVLGISPQTASRRLIALERQQFVTRSMKPDGQYVAVTREGEQALKREYADYVRIFNPDQRGYTLTGTVISGLGEGRYYMSIPHYKEQFGGCLGFEPFPGTLNIRLDAASIAVRKHLDHAGWIDVPGFTADDRTFGGARVLPCLIRGYRCAIVVPSRTHYPEDTIEVIAGCELRKALNLNDNDTIEVEITHD.

Residues 1-92 form a unknown region; sequence MVEAEDLQSL…VRIFNPDQRG (92 aa). The interval 93–222 is riboflavin kinase; that stretch reads YTLTGTVISG…DTIEVEITHD (130 aa). CDP is bound at residue 102 to 107; it reads GLGEGR. Mg(2+)-binding residues include T131 and N133. FMN is bound by residues T188 and E196. 201-204 lines the CDP pocket; sequence CELR.

Belongs to the archaeal riboflavin kinase family. Requires Mg(2+) as cofactor.

It catalyses the reaction riboflavin + CTP = CDP + FMN + H(+). It functions in the pathway cofactor biosynthesis; FMN biosynthesis; FMN from riboflavin (CTP route): step 1/1. Functionally, catalyzes the CTP-dependent phosphorylation of riboflavin (vitamin B2) to form flavin mononucleotide (FMN). The chain is Riboflavin kinase (ribK) from Methanoculleus marisnigri (strain ATCC 35101 / DSM 1498 / JR1).